Here is a 480-residue protein sequence, read N- to C-terminus: Adenosylhomocysteinase (480 aa).

Substrate is bound by residues T63, D142, and E203. 204–206 (TTT) lines the NAD(+) pocket. 2 residues coordinate substrate: K233 and D237. NAD(+) contacts are provided by residues N238, 267-272 (GYGDVG), E290, N325, 346-348 (IGH), and N394.

It belongs to the adenosylhomocysteinase family. NAD(+) serves as cofactor.

It localises to the cytoplasm. The enzyme catalyses S-adenosyl-L-homocysteine + H2O = L-homocysteine + adenosine. The protein operates within amino-acid biosynthesis; L-homocysteine biosynthesis; L-homocysteine from S-adenosyl-L-homocysteine: step 1/1. In terms of biological role, may play a key role in the regulation of the intracellular concentration of adenosylhomocysteine. This Xylella fastidiosa (strain M12) protein is Adenosylhomocysteinase.